The primary structure comprises 365 residues: Flavone synthase (365 aa).

4 residues coordinate Fe cation: His-76, His-218, Asp-220, and His-276. The 102-residue stretch at 194 to 295 folds into the Fe2OG dioxygenase domain; that stretch reads MEQKVLINYY…RLSIATFQNP (102 aa). Residues 345 to 365 form a disordered region; that stretch reads RLQDEKAKLEMKSKSADENLA.

This sequence belongs to the iron/ascorbate-dependent oxidoreductase family. Requires Fe cation as cofactor. The cofactor is L-ascorbate.

It is found in the cytoplasm. It catalyses the reaction a flavanone + 2-oxoglutarate + O2 = a flavone + succinate + CO2 + H2O. It participates in secondary metabolite biosynthesis; flavonoid biosynthesis. Its function is as follows. Involved in the conversion of naringenin to apigenin. Acts via a direct 2,3-desaturation of flavanones instead of a sequential hydroxylation/dehydratation mechanism. The polypeptide is Flavone synthase (FNSI) (Petroselinum crispum (Parsley)).